Here is a 488-residue protein sequence, read N- to C-terminus: Ribulose bisphosphate carboxylase large chain (488 aa).

Substrate contacts are provided by N127 and T177. Catalysis depends on K179, which acts as the Proton acceptor. K181 is a binding site for substrate. Mg(2+)-binding residues include K205, D207, and E208. K205 carries the post-translational modification N6-carboxylysine. The active-site Proton acceptor is H297. Residues R298, H330, and S382 each coordinate substrate.

This sequence belongs to the RuBisCO large chain family. Type I subfamily. In terms of assembly, heterohexadecamer of 8 large chains and 8 small chains. It depends on Mg(2+) as a cofactor.

Its subcellular location is the plastid. The protein resides in the chloroplast. The enzyme catalyses 2 (2R)-3-phosphoglycerate + 2 H(+) = D-ribulose 1,5-bisphosphate + CO2 + H2O. It catalyses the reaction D-ribulose 1,5-bisphosphate + O2 = 2-phosphoglycolate + (2R)-3-phosphoglycerate + 2 H(+). Functionally, ruBisCO catalyzes two reactions: the carboxylation of D-ribulose 1,5-bisphosphate, the primary event in carbon dioxide fixation, as well as the oxidative fragmentation of the pentose substrate in the photorespiration process. Both reactions occur simultaneously and in competition at the same active site. The polypeptide is Ribulose bisphosphate carboxylase large chain (Cyanidium caldarium (Red alga)).